Here is a 135-residue protein sequence, read N- to C-terminus: NADPH-dependent 7-cyano-7-deazaguanine reductase (135 aa).

The active-site Thioimide intermediate is the C48. The active-site Proton donor is the D55. Substrate is bound by residues 70–72 (IEL) and 89–90 (HE).

Belongs to the GTP cyclohydrolase I family. QueF type 1 subfamily.

Its subcellular location is the cytoplasm. The enzyme catalyses 7-aminomethyl-7-carbaguanine + 2 NADP(+) = 7-cyano-7-deazaguanine + 2 NADPH + 3 H(+). Its pathway is tRNA modification; tRNA-queuosine biosynthesis. Functionally, catalyzes the NADPH-dependent reduction of 7-cyano-7-deazaguanine (preQ0) to 7-aminomethyl-7-deazaguanine (preQ1). The protein is NADPH-dependent 7-cyano-7-deazaguanine reductase of Prochlorococcus marinus (strain MIT 9313).